The following is a 245-amino-acid chain: tRNA (guanine-N(7)-)-methyltransferase (245 aa).

Positions 75, 100, 127, and 150 each coordinate S-adenosyl-L-methionine. D150 is an active-site residue. Substrate contacts are provided by residues K154, D186, and 223 to 226 (TKFE).

The protein belongs to the class I-like SAM-binding methyltransferase superfamily. TrmB family.

The catalysed reaction is guanosine(46) in tRNA + S-adenosyl-L-methionine = N(7)-methylguanosine(46) in tRNA + S-adenosyl-L-homocysteine. It functions in the pathway tRNA modification; N(7)-methylguanine-tRNA biosynthesis. Functionally, catalyzes the formation of N(7)-methylguanine at position 46 (m7G46) in tRNA. The polypeptide is tRNA (guanine-N(7)-)-methyltransferase (Photobacterium profundum (strain SS9)).